The chain runs to 1199 residues: RNA-binding protein 20 (1199 aa).

Disordered stretches follow at residues 1-55, 163-186, and 320-346; these read MVLA…PQAS, PSTA…SLPS, and ERPP…PASQ. The span at 25–42 shows a compositional bias: low complexity; the sequence is VMPGVQGPSVPQGQQGMQ. Over residues 43 to 52 the composition is skewed to pro residues; that stretch reads PLPPPPPPQP. Over residues 170–183 the composition is skewed to low complexity; sequence SPPSQTGGPGPSVS. A U1-type zinc finger spans residues 410-444; the sequence is HLPHICSICDKKVFDLKDWELHVKGKLHAQKCLLF. Residues 520 to 595 enclose the RRM domain; it reads RVVHICNLPE…EKLLIRMSTR (76 aa). Residues 626–636 show a composition bias toward basic and acidic residues; sequence EADRYGPERPR. Disordered regions lie at residues 626 to 685, 720 to 884, and 944 to 1077; these read EADR…NGED, REKY…YPTN, and GETL…SQAC. The segment at 630-649 is RS; sequence YGPERPRSRSPMSRSLSPRS. Phosphoserine is present on residues Ser637, Ser639, Ser642, Ser644, and Ser651. The segment covering 638 to 649 has biased composition (low complexity); it reads RSPMSRSLSPRS. A compositionally biased stretch (basic and acidic residues) spans 667–685; it reads YAWRDEDRETVPRRENGED. A Phosphoserine modification is found at Ser728. Basic and acidic residues-rich tracts occupy residues 739–758, 770–831, and 859–868; these read KGRE…DKYP, RKEE…KESQ, and ENTRTKKGQD. Ser787 is modified (phosphoserine). Phosphoserine is present on residues Ser871, Ser873, and Ser955. Positions 962-971 are enriched in polar residues; the sequence is VPSTSASCPN. Phosphoserine occurs at positions 991, 1026, 1038, 1049, 1054, 1058, 1070, 1088, and 1093. Residues 1042-1055 are compositionally biased toward basic and acidic residues; that stretch reads DDCKARGSPEDGSH. A compositionally biased stretch (polar residues) spans 1067–1077; sequence PTESDLQSQAC. The segment at 1133-1164 adopts a Matrin-type zinc-finger fold; that stretch reads FYCKLCGLFYTSEEAAKVSHCRSTVHYRNLQK. The tract at residues 1172–1199 is disordered; it reads EGLKETEGTDSPSPERGGIGPHLERKKL. A phosphoserine mark is found at Ser1182 and Ser1184.

As to quaternary structure, associates with components of the U1 and U2 U1 small nuclear ribonucleoprotein complexes. Phosphorylation regulates the subcellular localization. Phosphorylation of Ser-637 and Ser-639 in the RS (arginine/serine-rich) region promotes nuclear localization of the protein. In contrast, phosphorylation of the C-terminal disordered region promotes localization to cytoplasmic ribonucleoprotein granules. As to expression, predominantly expressed in striated muscle, with highest expression in the heart. In differentiating myoblasts, expression correlates with sarcomere assembly: expression peaks when alpha-actinin is localized mainly in mature Z bodies within the nascent myofiber and expression declines as the sarcomeres continue to mature. Also expressed in kidney.

Its subcellular location is the nucleus. It is found in the cytoplasm. The protein resides in the cytoplasmic ribonucleoprotein granule. RNA-binding protein that acts as a regulator of mRNA splicing of a subset of genes encoding key structural proteins involved in cardiac development, such as TTN (Titin), CACNA1C, CAMK2D or PDLIM5/ENH. Acts as a repressor of mRNA splicing: specifically binds the 5'UCUU-3' motif that is predominantly found within intronic sequences of pre-mRNAs, leading to the exclusion of specific exons in target transcripts. RBM20-mediated exon skipping is hormone-dependent and is essential for TTN isoform transition in both cardiac and skeletal muscles. RBM20-mediated exon skipping of TTN provides substrates for the formation of circular RNA (circRNAs) from the TTN transcripts. Together with RBM24, promotes the expression of short isoforms of PDLIM5/ENH in cardiomyocytes. The protein is RNA-binding protein 20 of Mus musculus (Mouse).